Consider the following 344-residue polypeptide: [LysW]-L-2-aminoadipate 6-phosphate reductase (344 aa).

NADP(+)-binding positions include 12-15, 36-38, and leucine 75; these read SGYA and SRR. Cysteine 148 is a catalytic residue. NADP(+) contacts are provided by serine 180, alanine 184, and asparagine 312.

Belongs to the NAGSA dehydrogenase family. Type 1 subfamily. LysY sub-subfamily. As to quaternary structure, homotetramer. Interacts with LysW. May form a ternary complex with LysW and LysZ.

The protein localises to the cytoplasm. It carries out the reaction [amino-group carrier protein]-C-terminal-N-(1-carboxy-5-oxopentan-1-yl)-L-glutamine + phosphate + NADP(+) = [amino-group carrier protein]-C-terminal-N-(1-carboxy-5-phosphooxy-5-oxopentan-1-yl)-L-glutamine + NADPH + H(+). It functions in the pathway amino-acid biosynthesis; L-lysine biosynthesis via AAA pathway; L-lysine from L-alpha-aminoadipate (Thermus route): step 3/5. Functionally, catalyzes the NADPH-dependent reduction of [LysW]-aminoadipate 6-phosphate to yield [LysW]-aminoadipate 6-semialdehyde. The chain is [LysW]-L-2-aminoadipate 6-phosphate reductase from Thermus thermophilus (strain ATCC BAA-163 / DSM 7039 / HB27).